The chain runs to 113 residues: Protein translation factor SUI1 homolog 2 (113 aa).

Position 2 is an N-acetylserine (S2).

The protein belongs to the SUI1 family.

In terms of biological role, probably involved in translation. The protein is Protein translation factor SUI1 homolog 2 of Arabidopsis thaliana (Mouse-ear cress).